Reading from the N-terminus, the 1272-residue chain is Fused isobutyryl-CoA mutase (1272 aa).

The B12-binding domain occupies 20–158 (RLRFVTAAAL…ARCAEGARAA (139 aa)). H33 serves as a coordination point for adenosylcob(III)alamin. A GTPase chaperone MeaI region spans residues 163 to 536 (ESQVGAWAAE…YRHVAEALRK (374 aa)). Positions 193-240 (GAVARNPSSEASRVAAAGRGDHLDRGVRAASTADTADTANTANTANTA) are disordered. The segment covering 221 to 240 (AASTADTADTANTANTANTA) has biased composition (low complexity). 334–339 (GAGKSS) contributes to the GTP binding site. Residues S338, I363, D364, and D377 each coordinate Mg(2+). R380 serves as a coordination point for GTP. E429 and T430 together coordinate Mg(2+). A GTP-binding site is contributed by 476-479 (NKFD). Positions 537–758 (HGLRSGGGRL…MLDNLPGYFP (222 aa)) are linker. Low complexity-rich tracts occupy residues 614-631 (TVAT…KANA) and 639-663 (ANAS…ATPT). The tract at residues 614–667 (TVATSASPGASASSKANACTSTSSKANASPGANTTANSNASATSGTATPTDALN) is disordered. Substrate is bound by residues F766, R801, R907, Y951, S1000, R1035, and K1040. E1152 and N1271 together coordinate GTP.

Belongs to the IcmF family. As to quaternary structure, homodimer. Requires adenosylcob(III)alamin as cofactor. The cofactor is Mg(2+).

The enzyme catalyses 2-methylpropanoyl-CoA = butanoyl-CoA. The catalysed reaction is GTP + H2O = GDP + phosphate + H(+). In terms of biological role, catalyzes the reversible interconversion of isobutyryl-CoA and n-butyryl-CoA, using radical chemistry. Also exhibits GTPase activity, associated with its G-protein domain (MeaI) that functions as a chaperone that assists cofactor delivery and proper holo-enzyme assembly. Does not exhibit methylmalonyl-CoA mutase (MCM) activity. This Paraburkholderia xenovorans (strain LB400) protein is Fused isobutyryl-CoA mutase.